A 425-amino-acid chain; its full sequence is tRNA(Ile)-lysidine synthase (425 aa).

An ATP-binding site is contributed by Ser-27–Ser-32.

The protein belongs to the tRNA(Ile)-lysidine synthase family.

Its subcellular location is the cytoplasm. It carries out the reaction cytidine(34) in tRNA(Ile2) + L-lysine + ATP = lysidine(34) in tRNA(Ile2) + AMP + diphosphate + H(+). Ligates lysine onto the cytidine present at position 34 of the AUA codon-specific tRNA(Ile) that contains the anticodon CAU, in an ATP-dependent manner. Cytidine is converted to lysidine, thus changing the amino acid specificity of the tRNA from methionine to isoleucine. The chain is tRNA(Ile)-lysidine synthase from Streptococcus sanguinis (strain SK36).